We begin with the raw amino-acid sequence, 468 residues long: Secretogranin-3 (468 aa).

The N-terminal stretch at 1 to 19 is a signal peptide; the sequence is MGFLGTGTWILVLVLPIQA. A disordered region spans residues 23-69; the sequence is PGGSQDKSLHNRELSAERPLNEQIAEAEEDKIKKTYPPENKPGQSNY. Over residues 29–42 the composition is skewed to basic and acidic residues; that stretch reads KSLHNRELSAERPL. The residue at position 37 (Ser-37) is a Phosphoserine. Residue Ser-37 is glycosylated (O-linked (Xyl...) (chondroitin sulfate) serine). O-linked (GalNAc...) threonine glycosylation is found at Thr-216 and Thr-231. The interval 353–406 is disordered; that stretch reads KLFPAPSEKSHEETDSTKEEAAKMEKEYGSLKDSTKDDNSNPGGKTDEPKGKTE. A glycan (O-linked (GalNAc...) serine) is linked at Ser-359. Residues 360-406 show a composition bias toward basic and acidic residues; that stretch reads EKSHEETDSTKEEAAKMEKEYGSLKDSTKDDNSNPGGKTDEPKGKTE. Ser-362 carries the phosphoserine modification.

As to quaternary structure, interacts with CHGA. Interacts with secretogranin II/SCG2. Interacts (via C-terminus) with CPE. Post-translationally, O-glycosylated. As to expression, detected in urine (at protein level). Expressed in brain, heart, kidney, liver and skeletal muscle.

The protein resides in the cytoplasmic vesicle. Its subcellular location is the secretory vesicle. The protein localises to the secretory vesicle membrane. It is found in the secreted. Its function is as follows. Member of the granin protein family that regulates the biogenesis of secretory granules. Acts as a sorting receptor for intragranular proteins including chromogranin A/CHGA. May also play a role in angiogenesis. Promotes endothelial proliferation, migration and tube formation through MEK/ERK signaling pathway. This chain is Secretogranin-3 (SCG3), found in Homo sapiens (Human).